Reading from the N-terminus, the 651-residue chain is Intraflagellar transport protein 70A (651 aa).

7 TPR repeats span residues 8–41, 42–75, 140–173, 175–207, 372–405, 410–443, and 445–478; these read DGEYTATIYKLIKEARYGEAIQILSNELQKQYRS, RAGLSLLGYCYYQIQDFVNAADCYEQLIQITPEV, PESEINMGCLLYKEGHYEEACKKFITAMQVMGYK, DLSYNIALCYYSMKQYAPALKHIADIIERGIRE, LTEQMRKLTKQVQEARHNRDDEAVKKAVNEYDET, IPVLMAQAKIYWNMENYQMVEKIFRKSVEFCNEH, and IWKLNVAHVLFMQDNKYKEAIGFYEPIVKKHYDN. Residues 494 to 521 adopt a coiled-coil conformation; that stretch reads YIMTSQNEEAEELMRKIEKEEEQIAYEN. The stretch at 530–563 is one TPR 8 repeat; it reads CIVNLVIGTLYCAKGNYEFGISRVIKSLEPYNKK.

This sequence belongs to the TTC30/dfy-1/fleer family.

Its subcellular location is the cell projection. It localises to the cilium. Functionally, required for polyglutamylation of axonemal tubulin. Plays a role in anterograde intraflagellar transport (IFT), the process by which cilia precursors are transported from the base of the cilium to the site of their incorporation at the tip. This Xenopus tropicalis (Western clawed frog) protein is Intraflagellar transport protein 70A (ift70a).